Consider the following 296-residue polypeptide: 33 kDa chaperonin (296 aa).

2 cysteine pairs are disulfide-bonded: C233-C235 and C267-C270.

Belongs to the HSP33 family. In terms of processing, under oxidizing conditions two disulfide bonds are formed involving the reactive cysteines. Under reducing conditions zinc is bound to the reactive cysteines and the protein is inactive.

It is found in the cytoplasm. Its function is as follows. Redox regulated molecular chaperone. Protects both thermally unfolding and oxidatively damaged proteins from irreversible aggregation. Plays an important role in the bacterial defense system toward oxidative stress. This Actinobacillus pleuropneumoniae serotype 5b (strain L20) protein is 33 kDa chaperonin.